A 366-amino-acid chain; its full sequence is Structure-specific endonuclease subunit SLX1 (366 aa).

The 82-residue stretch at 14–95 (AFYCCYLLRS…QNTHATRHID (82 aa)) folds into the GIY-YIG domain. Disordered regions lie at residues 31-59 (IGSTPNPARRLGQHNGSSKGGAKRTSMQG) and 102-124 (RAEELQKGKKKATSPGRRRKRPP). Over residues 109–123 (GKKKATSPGRRRKRP) the composition is skewed to basic residues. The SLX1-type zinc finger occupies 234–289 (CGVCKNPADMSSSLILVCPIEACQTVSHLSCLSNKFLTEGGELETLVPLEGTCPGC). The interval 317-366 (KPKRKRKSDNPAESDAADGQALEQEDEELDETWMEDMSQDEEPSPVKKSR) is disordered. Over residues 339-359 (EQEDEELDETWMEDMSQDEEP) the composition is skewed to acidic residues.

Belongs to the SLX1 family. In terms of assembly, forms a heterodimer with SLX4. Requires a divalent metal cation as cofactor.

It is found in the nucleus. In terms of biological role, catalytic subunit of the SLX1-SLX4 structure-specific endonuclease that resolves DNA secondary structures generated during DNA repair and recombination. Has endonuclease activity towards branched DNA substrates, introducing single-strand cuts in duplex DNA close to junctions with ss-DNA. The polypeptide is Structure-specific endonuclease subunit SLX1 (Phaeosphaeria nodorum (strain SN15 / ATCC MYA-4574 / FGSC 10173) (Glume blotch fungus)).